The chain runs to 270 residues: tRNA pseudouridine synthase B (270 aa).

Aspartate 49 acts as the Nucleophile in catalysis.

It belongs to the pseudouridine synthase TruB family. Type 1 subfamily.

The enzyme catalyses uridine(55) in tRNA = pseudouridine(55) in tRNA. Its function is as follows. Responsible for synthesis of pseudouridine from uracil-55 in the psi GC loop of transfer RNAs. The sequence is that of tRNA pseudouridine synthase B from Bartonella quintana (strain Toulouse) (Rochalimaea quintana).